The primary structure comprises 374 residues: RNA ligase 1 (374 aa).

ATP is bound by residues Tyr37, Arg54, and Lys75. Lys99 (N6-AMP-lysine intermediate) is an active-site residue. ATP-binding residues include Glu159, Lys240, and Lys242. Mg(2+) is bound at residue Asp272.

It belongs to the Tequatrovirus RNA ligase 1 family. It depends on Mg(2+) as a cofactor.

It catalyses the reaction ATP + (ribonucleotide)n-3'-hydroxyl + 5'-phospho-(ribonucleotide)m = (ribonucleotide)n+m + AMP + diphosphate.. In terms of biological role, involved in countering a host defense mechanism which, following viral infection, activates the host anticodon nuclease and shuts off viral translation. Repairs 5'-PO4 and 3'-OH groups in the cleaved host tRNA. The nick ligation reaction entails three nucleotidyl transfer steps. In the first step, the RNA ligase reacts with ATP in the absence of nucleic acid to form a covalent ligase-AMP intermediate and release pyrophosphate. In step 2, the ligase-AMP binds to the nicked duplex nucleic acid and transfers the adenylate to the 5'-PO4 terminus to form an adenylylated nicked intermediate. In step 3, the RNA ligase directs the attack of the nick 3'-OH on the 5'-phosphoanhydride linkage, resulting in a repaired 3'-5' phosphodiester and release of AMP. This Enterobacteria phage T4 (Bacteriophage T4) protein is RNA ligase 1 (63).